The sequence spans 948 residues: Coatomer subunit beta-1 (948 aa).

HEAT repeat units lie at residues 49–87, 92–126, 127–164, 274–311, 312–349, and 391–428; these read ETIP…TDSK, PEMI…MKET, EIVE…LPQG, TAIR…TLHR, DIMV…HHNI, and EVAS…TNPK.

In terms of assembly, oligomeric complex that consists of at least the alpha, beta, beta', gamma, delta, epsilon and zeta subunits.

Its subcellular location is the cytoplasm. It localises to the golgi apparatus membrane. It is found in the cytoplasmic vesicle. The protein resides in the COPI-coated vesicle membrane. Functionally, the coatomer is a cytosolic protein complex that binds to dilysine motifs and reversibly associates with Golgi non-clathrin-coated vesicles, which further mediate biosynthetic protein transport from the ER, via the Golgi up to the trans Golgi network. Coatomer complex is required for budding from Golgi membranes, and is essential for the retrograde Golgi-to-ER transport of dilysine-tagged proteins. The protein is Coatomer subunit beta-1 of Arabidopsis thaliana (Mouse-ear cress).